The sequence spans 645 residues: Macrolide export ATP-binding/permease protein MacB (645 aa).

Residues 6–244 form the ABC transporter domain; the sequence is IELEGIRRSY…SSIAVVPWQA (239 aa). 42 to 49 contributes to the ATP binding site; the sequence is GASGSGKS. 4 consecutive transmembrane segments (helical) span residues 274–294, 526–546, 574–594, and 596–616; these read ALTL…MAIG, IAAI…LITV, AVVL…VIGV, and AALL…GALM.

It belongs to the ABC transporter superfamily. Macrolide exporter (TC 3.A.1.122) family. Homodimer.

The protein localises to the cell inner membrane. Functionally, non-canonical ABC transporter that contains transmembrane domains (TMD), which form a pore in the inner membrane, and an ATP-binding domain (NBD), which is responsible for energy generation. Confers resistance against macrolides. The chain is Macrolide export ATP-binding/permease protein MacB from Nitrobacter winogradskyi (strain ATCC 25391 / DSM 10237 / CIP 104748 / NCIMB 11846 / Nb-255).